Reading from the N-terminus, the 462-residue chain is BPI fold-containing family B member 2 (462 aa).

The first 22 residues, 1–22 (MARACSLGLLLLLLLLLRTVVT), serve as a signal peptide directing secretion. A Phosphothreonine modification is found at threonine 55. Position 63 is a phosphoserine (serine 63). A glycan (N-linked (GlcNAc...) asparagine) is linked at asparagine 99. Cysteine 140 and cysteine 177 are oxidised to a cystine. N-linked (GlcNAc...) asparagine glycosylation is found at asparagine 297 and asparagine 336.

The protein belongs to the BPI/LBP/Plunc superfamily. BPI/LBP family.

The protein resides in the secreted. This is BPI fold-containing family B member 2 (Bpifb2) from Mus musculus (Mouse).